The following is a 938-amino-acid chain: TFIIH basal transcription factor complex helicase/translocase XPB subunit (938 aa).

The 169-residue stretch at 394–562 folds into the Helicase ATP-binding domain; sequence FRSGNKAHQG…DLRHLVGPKL (169 aa). ATP is bound at residue 407–414; sequence LPCGAGKT. A DEVH box motif is present at residues 515-518; it reads DEVH. In terms of domain architecture, Helicase C-terminal spans 627 to 781; the sequence is WCTQALLEFH…SYRVLQSDMV (155 aa).

It belongs to the helicase family. RAD25/XPB subfamily. In terms of assembly, component of the 7-subunit TFIIH core complex composed of XPB, XPD, SSL1, TFB1, TFB2, TFB4 and TFB5.

The enzyme catalyses Couples ATP hydrolysis with the unwinding of duplex DNA by translocating in the 3'-5' direction.. The catalysed reaction is ATP + H2O = ADP + phosphate + H(+). Its function is as follows. ATP-dependent 3'-5' DNA helicase/translocase; binds dsDNA rather than ssDNA, unzipping it in a translocase rather than classical helicase activity. Component of the general transcription factor IIH (TFIIH) core complex, involved in spliced leader RNA (SL RNA) gene transcription by RNA polymerase II. TFIIH has an essential role in transcription initiation. When the pre-initiation complex (PIC) has been established, TFIIH is required for promoter opening and promoter escape. The ATPase activity of XPB is required for promoter opening and promoter escape. In Trypanosoma brucei brucei (strain 927/4 GUTat10.1), this protein is TFIIH basal transcription factor complex helicase/translocase XPB subunit.